The sequence spans 494 residues: MFS-type transporter lnaF (494 aa).

The segment at 1 to 51 is disordered; sequence MTYDPENAMGEARADAPVEAEKEHEATQTTVKESTLGYDNSSDPSRRDSYR. Residues 12–26 are compositionally biased toward basic and acidic residues; that stretch reads ARADAPVEAEKEHEA. 3 N-linked (GlcNAc...) asparagine glycosylation sites follow: Asn-40, Asn-58, and Asn-68. The next 10 helical transmembrane spans lie at 105–125, 128–148, 156–176, 203–223, 228–248, 290–310, 323–343, 354–374, 383–403, and 446–466; these read SLLI…DMFS, AGLL…TLAL, MLWY…GEYP, TLMA…CLIA, LPVT…IIMV, LAFF…STII, AIWQ…GAWL, ILGF…FPHL, VLYG…IGLI, and STFY…WFLP.

The protein belongs to the major facilitator superfamily. Sugar transporter (TC 2.A.1.1) family.

It localises to the cell membrane. MFS-type transporter; part of the lna gene cluster that mediates the biosynthesis of diastereomeric piperazines. Lna and lnb clusters encode sets of enzymes that produce overlapping sets of previously undescribed metabolites such as piperazinomycin-like metabolites or morpholine. The lna and lnb biosynthetic pathways appear to be part of a signaling network that controls the formation of sclerotia, a resilient overwintering structure. May be involved in the secretion of the metabolites produced by the lna and lnb clusters. In Aspergillus flavus (strain ATCC 200026 / FGSC A1120 / IAM 13836 / NRRL 3357 / JCM 12722 / SRRC 167), this protein is MFS-type transporter lnaF.